Here is a 578-residue protein sequence, read N- to C-terminus: MNILELSEQEVVRRNSLEQLRNLGIDPYPAAEYTVNAYSAEIKRNFNGDENVAKRQVSIAGRIMSRRIMGKATFMELQDAEGRIQIYITRDDICPGEDKEFYNTVVKKCTDIGDFIGVKGYVFRTQMGEISVHVQEMTFLSKAIRPLPVVKEKDGEVFDGFTDPEQRYRQRYVDLVVNSHVKDIFLKRTMVFNSMRSFFNECGYIEVDTPVLQSIPGGAAARPFITHHNALDIPLYLRIANELYLKRLIVGGFDGVYEFSRNFRNEGMDRTHNPEFTAMEIYVAYKDYNWMMNFTEQMLERICMDVLGTTQMKVGGKLIDFKAPYKRVTMIEAIHEHTGIDISGMNEAELRQVCDKLGVEHNETMGKGKLIDEIFGEKCEKNYIQPTFITDYPKEMSPLTKEHRTNPELTERFELMVNGKELANAYSELNDPIDQRERFEEQLKLSEKGDDEAMYIDNDFIRALEYGMPPTSGMGIGMDRLVMLLTGQESIQEVLLFPQMKPEKVAPRDTKEKFAVCGVPEEWVPVLHKAGYLTVQSMREDKPGKVMQQLMDINKKYKLGLAGLNLETVSAWQEAPYE.

Residues glutamate 414 and glutamate 421 each coordinate Mg(2+).

This sequence belongs to the class-II aminoacyl-tRNA synthetase family. In terms of assembly, homodimer. It depends on Mg(2+) as a cofactor.

The protein resides in the cytoplasm. It catalyses the reaction tRNA(Lys) + L-lysine + ATP = L-lysyl-tRNA(Lys) + AMP + diphosphate. The protein is Lysine--tRNA ligase of Porphyromonas gingivalis (strain ATCC BAA-308 / W83).